We begin with the raw amino-acid sequence, 1085 residues long: SLIT-ROBO Rho GTPase-activating protein 1 (1085 aa).

The region spanning 19–314 (SQVKEIRAQL…AVDNLEPRSD (296 aa)) is the F-BAR domain. Positions 351–390 (VQAELMLRYQQLQSRLATLKIENEEVKKTTEATLQTIQDM) form a coiled coil. Position 416 is a phosphoserine (S416). Residues 475 to 496 (YMTTRPPNVPPKPQKHRKSRPR) form a disordered region. A Rho-GAP domain is found at 506–694 (GDLETFVKDS…TIIIHHETIF (189 aa)). One can recognise an SH3 domain in the interval 743–802 (CEPIEAIAKFDYVGRSARELSFKKGASLLLYHRASEDWWEGRHNGIDGLVPHQYIVVQDM). The span at 808-822 (DTLSQKADSEASSGP) shows a compositional bias: polar residues. The segment at 808–954 (DTLSQKADSE…TGFNDHKPLD (147 aa)) is disordered. Phosphoserine occurs at positions 835 and 917. The span at 922-931 (SRHDSLKKID) shows a compositional bias: basic and acidic residues. S932 bears the Phosphoserine mark. Residues 937 to 946 (RSTSSGQYTG) are compositionally biased toward polar residues. Residues 956–985 (ETIAQDIEETMNTALNELRELERQSTAKHA) are a coiled coil. Residues 997–1011 (KNSPTPATSTESLSP) are compositionally biased toward polar residues. Disordered regions lie at residues 997–1038 (KNSP…MSTF) and 1051–1085 (KPPA…SCTM). S999 is modified (phosphoserine). Residue T1001 is modified to Phosphothreonine. The segment covering 1027–1037 (STSSSSDTMST) has biased composition (low complexity). Position 1032 is a phosphoserine (S1032).

In terms of assembly, homodimer. Forms a heterooligomer with SRGAP2 and SRGAP3 through its F-BAR domain. Interacts with ROBO1, CDC42 and RHOA. Interacts with FASLG. In terms of tissue distribution, expressed in brain, lung, kidney, and testis.

GTPase-activating protein for RhoA and Cdc42 small GTPases. Together with CDC42 seems to be involved in the pathway mediating the repulsive signaling of Robo and Slit proteins in neuronal migration. SLIT2, probably through interaction with ROBO1, increases the interaction of SRGAP1 with ROBO1 and inactivates CDC42. The sequence is that of SLIT-ROBO Rho GTPase-activating protein 1 (SRGAP1) from Homo sapiens (Human).